Consider the following 679-residue polypeptide: Methionine--tRNA ligase (679 aa).

The 'HIGH' region motif lies at 15-25 (PYANGPIHLGH). Zn(2+) contacts are provided by Cys146, Cys149, Cys159, and Cys162. The short motif at 332–336 (KMSKS) is the 'KMSKS' region element. Lys335 contributes to the ATP binding site. The region spanning 578-679 (DFAKIDLRIA…EGAQPGMKVK (102 aa)) is the tRNA-binding domain.

It belongs to the class-I aminoacyl-tRNA synthetase family. MetG type 1 subfamily. Homodimer. It depends on Zn(2+) as a cofactor.

The protein localises to the cytoplasm. It catalyses the reaction tRNA(Met) + L-methionine + ATP = L-methionyl-tRNA(Met) + AMP + diphosphate. In terms of biological role, is required not only for elongation of protein synthesis but also for the initiation of all mRNA translation through initiator tRNA(fMet) aminoacylation. This chain is Methionine--tRNA ligase, found in Shewanella pealeana (strain ATCC 700345 / ANG-SQ1).